Consider the following 106-residue polypeptide: Antitoxin MazE3 (106 aa).

Forms a complex with cognate toxin MazF3, possibly with 1:1 stoichiometry.

In terms of biological role, antitoxin component of a type II toxin-antitoxin (TA) system. Upon expression in E.coli and M.smegmatis neutralizes the effect of cognate toxin MazF3. Overexpression of MazE3 alone decreased persister cells formation in M.smegmatis upon challenge with gentamicin or kanamycin. This Mycobacterium tuberculosis (strain ATCC 25618 / H37Rv) protein is Antitoxin MazE3 (mazE3).